A 600-amino-acid polypeptide reads, in one-letter code: UPF0588 membrane protein C20F10.02c (600 aa).

Helical transmembrane passes span 409-429 (LSAT…TSLV) and 437-457 (YHWL…SVLI).

It belongs to the UPF0588 family.

The protein resides in the membrane. The polypeptide is UPF0588 membrane protein C20F10.02c (Schizosaccharomyces pombe (strain 972 / ATCC 24843) (Fission yeast)).